The primary structure comprises 143 residues: Transcriptional regulator MraZ (143 aa).

SpoVT-AbrB domains are found at residues 5-47 (THHP…PRAE) and 76-119 (TDEQ…NAER).

Belongs to the MraZ family. As to quaternary structure, forms oligomers.

It is found in the cytoplasm. Its subcellular location is the nucleoid. This is Transcriptional regulator MraZ from Saccharopolyspora erythraea (strain ATCC 11635 / DSM 40517 / JCM 4748 / NBRC 13426 / NCIMB 8594 / NRRL 2338).